The primary structure comprises 83 residues: Large ribosomal subunit protein bL31B (83 aa).

The protein belongs to the bacterial ribosomal protein bL31 family. Type B subfamily. In terms of assembly, part of the 50S ribosomal subunit.

This chain is Large ribosomal subunit protein bL31B, found in Leifsonia xyli subsp. xyli (strain CTCB07).